The sequence spans 41 residues: Large ribosomal subunit protein bL36 (41 aa).

This sequence belongs to the bacterial ribosomal protein bL36 family.

The protein is Large ribosomal subunit protein bL36 of Rhodopseudomonas palustris (strain TIE-1).